The primary structure comprises 352 residues: N-acetyl-gamma-glutamyl-phosphate reductase (352 aa).

The active site involves Cys-155.

This sequence belongs to the NAGSA dehydrogenase family. Type 1 subfamily.

The protein resides in the cytoplasm. It catalyses the reaction N-acetyl-L-glutamate 5-semialdehyde + phosphate + NADP(+) = N-acetyl-L-glutamyl 5-phosphate + NADPH + H(+). Its pathway is amino-acid biosynthesis; L-arginine biosynthesis; N(2)-acetyl-L-ornithine from L-glutamate: step 3/4. Its function is as follows. Catalyzes the NADPH-dependent reduction of N-acetyl-5-glutamyl phosphate to yield N-acetyl-L-glutamate 5-semialdehyde. This chain is N-acetyl-gamma-glutamyl-phosphate reductase, found in Synechococcus elongatus (strain ATCC 33912 / PCC 7942 / FACHB-805) (Anacystis nidulans R2).